Here is a 407-residue protein sequence, read N- to C-terminus: Naringenin 8-dimethylallyltransferase 2, chloroplastic (407 aa).

The transit peptide at 1-23 directs the protein to the chloroplast; sequence MGFVLPASFPGASSITTGGSCLR. The next 8 membrane-spanning stretches (helical) occupy residues 117 to 137, 145 to 165, 206 to 226, 248 to 268, 285 to 305, 328 to 348, 352 to 372, and 383 to 403; these read FCRP…SLVA, SLAF…IHIF, ILGL…TVFI, VLTA…GFFL, LIFC…FKDI, VFWI…LVGA, ILWS…VLWY, and VVLQ…YCLI.

The protein belongs to the UbiA prenyltransferase family. Mg(2+) serves as cofactor. Mn(2+) is required as a cofactor.

It localises to the plastid. It is found in the chloroplast membrane. The catalysed reaction is (2S)-naringenin + dimethylallyl diphosphate = sophoraflavanone B + diphosphate. In terms of biological role, involved in the biosynthesis of sophoraflavanone G (SFG). Can use flavanones (naringenin, liquiritigenin and hesperetin) as substrates, but not flavonols or isoflavones. Shows a strict specificity for dimethylallyl diphosphate. This chain is Naringenin 8-dimethylallyltransferase 2, chloroplastic (N8DT-2), found in Sophora flavescens (Shrubby sophora).